A 131-amino-acid polypeptide reads, in one-letter code: Holo-[acyl-carrier-protein] synthase (131 aa).

The Mg(2+) site is built by aspartate 8 and glutamate 63.

The protein belongs to the P-Pant transferase superfamily. AcpS family. Mg(2+) is required as a cofactor.

The protein resides in the cytoplasm. The enzyme catalyses apo-[ACP] + CoA = holo-[ACP] + adenosine 3',5'-bisphosphate + H(+). Transfers the 4'-phosphopantetheine moiety from coenzyme A to a Ser of acyl-carrier-protein. This is Holo-[acyl-carrier-protein] synthase from Shewanella halifaxensis (strain HAW-EB4).